A 250-amino-acid polypeptide reads, in one-letter code: Neurotrophic factor BDNF precursor form (250 aa).

An N-terminal signal peptide occupies residues 1 to 18 (MTILFLTMVISYFGCMKA). Residues 19-131 (APMKEANLRA…AANMSMRVRR (113 aa)) constitute a propeptide that is removed on maturation. Disulfide bonds link Cys144-Cys211, Cys189-Cys240, and Cys199-Cys242.

This sequence belongs to the NGF-beta family. Monomers and homodimers. Binds to NTRK2/TRKB. Can form heterodimers with other neurotrophin family members, such as NTF3 and NTF4 (in vitro), but the physiological relevance of this is not clear. BDNF precursor form: interacts with the heterodimer formed by NGFR and SORCS2. Mature BDNF has much lower affinity for the heterodimer formed by NGFR and SORCS2. In terms of processing, N-glycosylated and glycosulfated, contrary to mature BDNF. Mature BDNF is produced by proteolytic removal of the propeptide, catalyzed by a FURIN family member. In addition, the precursor form is proteolytically cleaved within the propeptide, but this is not an obligatory intermediate for the production of mature BDNF. Can be converted into mature BDNF by plasmin (PLG).

The protein localises to the secreted. Functionally, important signaling molecule that activates signaling cascades downstream of NTRK2. During development, promotes the survival and differentiation of selected neuronal populations of the peripheral and central nervous systems. Participates in axonal growth, pathfinding and in the modulation of dendritic growth and morphology. Major regulator of synaptic transmission and plasticity at adult synapses in many regions of the CNS. The versatility of BDNF is emphasized by its contribution to a range of adaptive neuronal responses including long-term potentiation (LTP), long-term depression (LTD), certain forms of short-term synaptic plasticity, as well as homeostatic regulation of intrinsic neuronal excitability. In terms of biological role, important signaling molecule that activates signaling cascades downstream of NTRK2. Activates signaling cascades via the heterodimeric receptor formed by NGFR and SORCS2. Signaling via NGFR and SORCS2 plays a role in synaptic plasticity and long-term depression (LTD). Binding to NGFR and SORCS2 promotes neuronal apoptosis. Promotes neuronal growth cone collapse. This is Neurotrophic factor BDNF precursor form (BDNF) from Bos taurus (Bovine).